The primary structure comprises 301 residues: Homoserine kinase (301 aa).

89-99 (KPGSGLGSSSA) serves as a coordination point for ATP.

The protein belongs to the GHMP kinase family. Homoserine kinase subfamily.

The protein localises to the cytoplasm. It carries out the reaction L-homoserine + ATP = O-phospho-L-homoserine + ADP + H(+). Its pathway is amino-acid biosynthesis; L-threonine biosynthesis; L-threonine from L-aspartate: step 4/5. Functionally, catalyzes the ATP-dependent phosphorylation of L-homoserine to L-homoserine phosphate. This is Homoserine kinase from Methanococcus maripaludis (strain C5 / ATCC BAA-1333).